We begin with the raw amino-acid sequence, 497 residues long: Glutamate--tRNA ligase (497 aa).

The short motif at 13-23 is the 'HIGH' region element; it reads PSPTGTPHVGM. The short motif at 257–261 is the 'KMSKS' region element; that stretch reads KLSKR. An ATP-binding site is contributed by lysine 260.

It belongs to the class-I aminoacyl-tRNA synthetase family. Glutamate--tRNA ligase type 1 subfamily. Monomer.

The protein resides in the cytoplasm. The catalysed reaction is tRNA(Glu) + L-glutamate + ATP = L-glutamyl-tRNA(Glu) + AMP + diphosphate. Catalyzes the attachment of glutamate to tRNA(Glu) in a two-step reaction: glutamate is first activated by ATP to form Glu-AMP and then transferred to the acceptor end of tRNA(Glu). The chain is Glutamate--tRNA ligase from Corynebacterium diphtheriae (strain ATCC 700971 / NCTC 13129 / Biotype gravis).